Here is a 248-residue protein sequence, read N- to C-terminus: 2,3-bisphosphoglycerate-dependent phosphoglycerate mutase (248 aa).

Substrate-binding positions include R8–N15, T21–G22, R60, E87–Y90, K98, R114–R115, and G183–N184. H9 serves as the catalytic Tele-phosphohistidine intermediate. Catalysis depends on E87, which acts as the Proton donor/acceptor.

This sequence belongs to the phosphoglycerate mutase family. BPG-dependent PGAM subfamily. Homodimer.

It carries out the reaction (2R)-2-phosphoglycerate = (2R)-3-phosphoglycerate. It participates in carbohydrate degradation; glycolysis; pyruvate from D-glyceraldehyde 3-phosphate: step 3/5. Its function is as follows. Catalyzes the interconversion of 2-phosphoglycerate and 3-phosphoglycerate. The sequence is that of 2,3-bisphosphoglycerate-dependent phosphoglycerate mutase from Burkholderia vietnamiensis (strain G4 / LMG 22486) (Burkholderia cepacia (strain R1808)).